Here is a 184-residue protein sequence, read N- to C-terminus: Glucosamine 6-phosphate N-acetyltransferase (184 aa).

The N-acetyltransferase domain occupies 39–184 (LVLRPLCTAD…ENYMCRRFLK (146 aa)). Residues threonine 61, 108–111 (KFIH), and 120–122 (EDV) each bind substrate. Residue 130 to 135 (GKQLGK) coordinates acetyl-CoA. 151-152 (YK) serves as a coordination point for substrate. Acetyl-CoA is bound at residue 165–167 (YKK). The substrate site is built by glutamate 175 and arginine 181.

This sequence belongs to the acetyltransferase family. GNA1 subfamily. Homodimer. Ubiquitous. Shows a strong differential expression pattern in adult hematopoietic precursor cells.

It is found in the golgi apparatus membrane. It localises to the endosome membrane. It carries out the reaction D-glucosamine 6-phosphate + acetyl-CoA = N-acetyl-D-glucosamine 6-phosphate + CoA + H(+). Its pathway is nucleotide-sugar biosynthesis; UDP-N-acetyl-alpha-D-glucosamine biosynthesis; N-acetyl-alpha-D-glucosamine 1-phosphate from alpha-D-glucosamine 6-phosphate (route I): step 1/2. This Mus musculus (Mouse) protein is Glucosamine 6-phosphate N-acetyltransferase (Gnpnat1).